The following is a 350-amino-acid chain: Phenylalanine--tRNA ligase alpha subunit (350 aa).

Glu-271 contacts Mg(2+).

This sequence belongs to the class-II aminoacyl-tRNA synthetase family. Phe-tRNA synthetase alpha subunit type 1 subfamily. In terms of assembly, tetramer of two alpha and two beta subunits. It depends on Mg(2+) as a cofactor.

The protein localises to the cytoplasm. It catalyses the reaction tRNA(Phe) + L-phenylalanine + ATP = L-phenylalanyl-tRNA(Phe) + AMP + diphosphate + H(+). The sequence is that of Phenylalanine--tRNA ligase alpha subunit from Delftia acidovorans (strain DSM 14801 / SPH-1).